Consider the following 463-residue polypeptide: Adenosylhomocysteinase (463 aa).

3 residues coordinate substrate: Thr54, Asp128, and Glu189. 190–192 (TTT) is a binding site for NAD(+). Substrate is bound by residues Lys219 and Asp223. NAD(+) contacts are provided by residues Asn224, 253–258 (GYGDVG), Glu276, Asn311, 332–334 (IGH), and Asn377.

It belongs to the adenosylhomocysteinase family. The cofactor is NAD(+).

The protein resides in the cytoplasm. It catalyses the reaction S-adenosyl-L-homocysteine + H2O = L-homocysteine + adenosine. The protein operates within amino-acid biosynthesis; L-homocysteine biosynthesis; L-homocysteine from S-adenosyl-L-homocysteine: step 1/1. In terms of biological role, may play a key role in the regulation of the intracellular concentration of adenosylhomocysteine. The chain is Adenosylhomocysteinase from Cereibacter sphaeroides (Rhodobacter sphaeroides).